Consider the following 342-residue polypeptide: MSAFTPASEVLLRHSDDFEQSRILFAGDLQDDLPARFESAASRVHTQQFHHWQLLSQLMGEKARFSLVAHADDVADCDTLIYYWPKNKPEAQFQLMNILSLLPLGTDIFVVGENRSGVRSAEQMLADYAPLNKIDSARRCGLYHGRLEKQPVFDAEKYWGEYRINDLTIKTLPGVFSRDGLDVGSQLLLSTLTPHTKGKVLDVGCGAGVLSAALASHSPKVRLTLCDVSAPAVEASRATLAANGVEGEVFASNVFSDVKGRFDMIISNPPFHDGIQTSLDAAQTLIHGAVRHLNSGGELRIVANAFLPYPKVLDETFGFHEVIAQTGRFKVYRTVMTRQAKK.

Belongs to the methyltransferase superfamily. RsmC family. In terms of assembly, monomer.

It localises to the cytoplasm. It carries out the reaction guanosine(1207) in 16S rRNA + S-adenosyl-L-methionine = N(2)-methylguanosine(1207) in 16S rRNA + S-adenosyl-L-homocysteine + H(+). Its function is as follows. Specifically methylates the guanine in position 1207 of 16S rRNA in the 30S particle. The protein is Ribosomal RNA small subunit methyltransferase C of Citrobacter koseri (strain ATCC BAA-895 / CDC 4225-83 / SGSC4696).